Reading from the N-terminus, the 443-residue chain is Thymidine phosphorylase (443 aa).

It belongs to the thymidine/pyrimidine-nucleoside phosphorylase family. As to quaternary structure, homodimer.

The catalysed reaction is thymidine + phosphate = 2-deoxy-alpha-D-ribose 1-phosphate + thymine. Its pathway is pyrimidine metabolism; dTMP biosynthesis via salvage pathway; dTMP from thymine: step 1/2. The enzymes which catalyze the reversible phosphorolysis of pyrimidine nucleosides are involved in the degradation of these compounds and in their utilization as carbon and energy sources, or in the rescue of pyrimidine bases for nucleotide synthesis. This is Thymidine phosphorylase from Shewanella sp. (strain MR-7).